The sequence spans 179 residues: Large ribosomal subunit protein uL5 (179 aa).

It belongs to the universal ribosomal protein uL5 family. In terms of assembly, part of the 50S ribosomal subunit; part of the 5S rRNA/L5/L18/L25 subcomplex. Contacts the 5S rRNA and the P site tRNA. Forms a bridge to the 30S subunit in the 70S ribosome.

Its function is as follows. This is one of the proteins that bind and probably mediate the attachment of the 5S RNA into the large ribosomal subunit, where it forms part of the central protuberance. In the 70S ribosome it contacts protein S13 of the 30S subunit (bridge B1b), connecting the 2 subunits; this bridge is implicated in subunit movement. Contacts the P site tRNA; the 5S rRNA and some of its associated proteins might help stabilize positioning of ribosome-bound tRNAs. This Hamiltonella defensa subsp. Acyrthosiphon pisum (strain 5AT) protein is Large ribosomal subunit protein uL5.